A 1283-amino-acid polypeptide reads, in one-letter code: Protein kibra (1283 aa).

Over residues 1–13 (MPNLQQTASQSQH) the composition is skewed to polar residues. A disordered region spans residues 1–59 (MPNLQQTASQSQHHLYPPHLRPHHHHQQQQHHQQQQQQQHTHHQQQQQHHSDFPLPDGW). Over residues 20–29 (LRPHHHHQQQ) the composition is skewed to basic residues. Residues 30-48 (QHHQQQQQQQHTHHQQQQQ) are compositionally biased toward low complexity. 2 WW domains span residues 53–86 (FPLP…DPRD) and 100–133 (DELP…DPRQ). Coiled-coil stretches lie at residues 200 to 228 (ELLR…NDIS) and 334 to 462 (AEMA…KSFS). The segment covering 537-549 (AEVTLSPRSSLSM) has biased composition (polar residues). Residues 537 to 559 (AEVTLSPRSSLSMETPPASPMKY) form a disordered region. The 121-residue stretch at 690–810 (ELAQVQIGLK…NPEDSTLKWY (121 aa)) folds into the C2 domain. Disordered regions lie at residues 840 to 871 (ASNA…TRNQ), 887 to 910 (ELGP…ELDD), and 941 to 969 (ETNT…KRSQ). Residues 856 to 868 (ESTITSSQTSTLT) are compositionally biased toward low complexity. Acidic residues predominate over residues 895–909 (ECSDDDDEDEEEELD). Residues 941–965 (ETNTDRAYLPEKSRGQSQLMDDRPV) are compositionally biased toward basic and acidic residues. Residues 1048 to 1075 (SKLYFLNDQIAKLQNLKEVLQKACENKD) are a coiled coil. Residues 1197–1263 (NKNLSEHPHR…PAAAPIPVAS (67 aa)) are disordered. Over residues 1217–1262 (APVATPAATPAATPAATPVATPAATPVVATAAQPEAKPAAAPIPVA) the composition is skewed to low complexity.

Belongs to the WWC family. KIBRA subfamily. In terms of assembly, forms a complex with Mer and Ex. Interacts (via domain WW 1) with Ex (via RXPPXY motif). Interacts with Mer, Sav, Hpo and Wts.

The protein resides in the cytoplasm. The protein localises to the apical cell membrane. Regulator of the Hippo/SWH (Sav/Wts/Hpo) signaling pathway, a signaling pathway that plays a pivotal role in organ size control and tumor suppression by restricting proliferation and promoting apoptosis. The core of this pathway is composed of a kinase cascade wherein Hippo (Hpo), in complex with its regulatory protein Salvador (Sav), phosphorylates and activates Warts (Wts) in complex with its regulatory protein Mats, which in turn phosphorylates and inactivates the Yorkie (Yki) oncoprotein. Kibra acts synergistically along with Ex and Mer to regulate the Hippo signaling pathway. This is Protein kibra (Kibra) from Drosophila erecta (Fruit fly).